We begin with the raw amino-acid sequence, 213 residues long: Inactive ribonuclease-like protein 10 (213 aa).

The N-terminal stretch at 1–24 (MKLTLVQIFFMMLLLLLGLGMGLG) is a signal peptide. Asn131 is a glycosylation site (N-linked (GlcNAc...) asparagine).

This sequence belongs to the pancreatic ribonuclease family. The N-terminus is blocked. Glycosylated. In terms of tissue distribution, male-specific expression in proximal caput of the epididymis.

The protein resides in the secreted. Functionally, secreted proximal epididymal protein required for post-testicular sperm maturation and male fertility. May be involved in sperm adhesion to the egg zona pellucida. Does not have ribonuclease activity. This chain is Inactive ribonuclease-like protein 10 (RNASE10), found in Equus caballus (Horse).